We begin with the raw amino-acid sequence, 513 residues long: ATP synthase subunit alpha (513 aa).

169-176 (GDRQTGKT) contacts ATP.

The protein belongs to the ATPase alpha/beta chains family. In terms of assembly, F-type ATPases have 2 components, CF(1) - the catalytic core - and CF(0) - the membrane proton channel. CF(1) has five subunits: alpha(3), beta(3), gamma(1), delta(1), epsilon(1). CF(0) has three main subunits: a(1), b(2) and c(9-12). The alpha and beta chains form an alternating ring which encloses part of the gamma chain. CF(1) is attached to CF(0) by a central stalk formed by the gamma and epsilon chains, while a peripheral stalk is formed by the delta and b chains.

It is found in the cell inner membrane. The enzyme catalyses ATP + H2O + 4 H(+)(in) = ADP + phosphate + 5 H(+)(out). Functionally, produces ATP from ADP in the presence of a proton gradient across the membrane. The alpha chain is a regulatory subunit. The sequence is that of ATP synthase subunit alpha from Proteus mirabilis (strain HI4320).